A 113-amino-acid polypeptide reads, in one-letter code: MSASVLSVISRFLEEYLSSTPQRLKLLDAYLLYILLTGALQFGYCLLVGTFPFNSFLSGFISCVGSFILAVCLRIQINPQNKADFQGISPERAFADFLFASTILHLVVMNFVG.

S2 carries the post-translational modification N-acetylserine. Topologically, residues 2–30 (SASVLSVISRFLEEYLSSTPQRLKLLDAY) are cytoplasmic. Residues 31–51 (LLYILLTGALQFGYCLLVGTF) traverse the membrane as a helical segment. Residue P52 is a topological domain, lumenal. The chain crosses the membrane as a helical span at residues 53-73 (FNSFLSGFISCVGSFILAVCL). Over 74-92 (RIQINPQNKADFQGISPER) the chain is Cytoplasmic. A helical membrane pass occupies residues 93–113 (AFADFLFASTILHLVVMNFVG).

Belongs to the DAD/OST2 family. As to quaternary structure, component of the oligosaccharyltransferase (OST) complex. OST exists in two different complex forms which contain common core subunits RPN1, RPN2, OST48, OST4, DAD1 and TMEM258, either STT3A or STT3B as catalytic subunits, and form-specific accessory subunits. STT3A complex assembly occurs through the formation of 3 subcomplexes. Subcomplex 1 contains RPN1 and TMEM258, subcomplex 2 contains the STT3A-specific subunits STT3A, DC2/OSTC, and KCP2 as well as the core subunit OST4, and subcomplex 3 contains RPN2, DAD1, and OST48. The STT3A complex can form stable complexes with the Sec61 complex or with both the Sec61 and TRAP complexes.

It is found in the endoplasmic reticulum membrane. It functions in the pathway protein modification; protein glycosylation. Functionally, subunit of the oligosaccharyl transferase (OST) complex that catalyzes the initial transfer of a defined glycan (Glc(3)Man(9)GlcNAc(2) in eukaryotes) from the lipid carrier dolichol-pyrophosphate to an asparagine residue within an Asn-X-Ser/Thr consensus motif in nascent polypeptide chains, the first step in protein N-glycosylation. N-glycosylation occurs cotranslationally and the complex associates with the Sec61 complex at the channel-forming translocon complex that mediates protein translocation across the endoplasmic reticulum (ER). All subunits are required for a maximal enzyme activity. The sequence is that of Dolichyl-diphosphooligosaccharide--protein glycosyltransferase subunit DAD1 from Sus scrofa (Pig).